A 301-amino-acid chain; its full sequence is Mitochondrial substrate carrier family protein Z (301 aa).

Residues 1-19 lie on the Mitochondrial intermembrane side of the membrane; that stretch reads MTGKEENKQQQHVNFPWKR. Solcar repeat units lie at residues 14-101, 116-200, and 210-293; these read NFPW…FTEQ, QQFG…ISDY, and LPVW…VMGI. A helical transmembrane segment spans residues 20 to 37; the sequence is LVAGAVAGTADVWACHPL. The Mitochondrial matrix segment spans residues 38–65; sequence DRIKTQLQNNPGKSIVGTFGDIVSKGKG. A helical membrane pass occupies residues 66-86; that stretch reads FTGGVNALYEGILPMTAEAIF. Residues 87–117 are Mitochondrial intermembrane-facing; that stretch reads KVGIRYFAFSWFTEQYKTTVYKGETLNKKQQ. The helical transmembrane segment at 118–138 threads the bilayer; the sequence is FGANLLGGAFAGTIESFVVVI. At 139–174 the chain is on the mitochondrial matrix side; that stretch reads PCELLKVRHMTQEHNKSFGTVFRDVLREEGFQGLYK. The helical transmembrane segment at 175–191 threads the bilayer; that stretch reads GGSATLLRQITNHMIRF. Residues 192–212 lie on the Mitochondrial intermembrane side of the membrane; the sequence is PTFYAISDYLKGGDHSVHLPV. Residues 213 to 229 traverse the membrane as a helical segment; that stretch reads WQNLSAGAIAGTASTLF. At 230–275 the chain is on the mitochondrial matrix side; sequence NNPLDTIKTRMQKQGQNQTTMQVVRGIYQETGVKGYWAGVIPRILR. Residues 276–296 traverse the membrane as a helical segment; the sequence is VAPGQAITWAVVELVMGILEP. The Mitochondrial intermembrane segment spans residues 297-301; sequence SSKKH.

The protein belongs to the mitochondrial carrier (TC 2.A.29) family.

It localises to the mitochondrion inner membrane. In terms of biological role, mitochondrial solute carriers shuttle metabolites, nucleotides, and cofactors through the mitochondrial inner membrane. The chain is Mitochondrial substrate carrier family protein Z (mcfZ) from Dictyostelium discoideum (Social amoeba).